The chain runs to 40 residues: Photosystem II reaction center protein X (40 aa).

The chain crosses the membrane as a helical span at residues 10–30 (FFYSILFGAIVLGLLGGGFIF).

It belongs to the PsbX family. Type 1 subfamily. PSII is composed of 1 copy each of membrane proteins PsbA, PsbB, PsbC, PsbD, PsbE, PsbF, PsbH, PsbI, PsbJ, PsbK, PsbL, PsbM, PsbT, PsbX, PsbY, PsbZ, Psb30/Ycf12, peripheral proteins PsbO, CyanoQ (PsbQ), PsbU, PsbV and a large number of cofactors. It forms dimeric complexes.

It localises to the cellular thylakoid membrane. In terms of biological role, involved in the binding and/or turnover of quinones at the Q(B) site of photosystem II (PSII). PSII is a light-driven water plastoquinone oxidoreductase, using light energy to abstract electrons from H(2)O, generating a proton gradient subsequently used for ATP formation. This Acaryochloris marina (strain MBIC 11017) protein is Photosystem II reaction center protein X.